We begin with the raw amino-acid sequence, 387 residues long: MATPTEHEDLSEQEVTEDEFKTPKIRETPEDIKLEAIVNTIAFHPKQDILAAGDIDGDIYLFSYSCTEGENKELWSSGHHLKSCRKVLFSSDGQKLFSVSKDKAIHIMDVEAGKLETRIPKAHKVPINAMLLIDENIFATGDDEGTLKVWDMRKGTSFMDLKHHEDYISDITIDQAKRTLLTSSGDGTLGVFNIKRRRFELLSEIQNGDLTSVSIMKRGRKVVCGSGEGTIYIFNWNGFGATSDRFAVQAESVDCIVPITDSILCAASTDGVIRAINILPNRVVGSIGQHVGEAIEEIARCRDTHFLASCAHDELIKFWDISSLPDEKVNDYRRRKKKDRRLKALSNKAFDTGQNFFAGLLDTTEENGKEGENDEDDDDEDSDSGSD.

Residues 1-10 (MATPTEHEDL) are compositionally biased toward basic and acidic residues. A disordered region spans residues 1–24 (MATPTEHEDLSEQEVTEDEFKTPK). WD repeat units lie at residues 33–72 (KLEAIVNTIAFHPKQDILAAGDIDGDIYLFSYSCTEGENK), 79–118 (HHLKSCRKVLFSSDGQKLFSVSKDKAIHIMDVEAGKLETR), 122–160 (AHKVPINAMLLIDENIFATGDDEGTLKVWDMRKGTSFMD), 163–202 (HHEDYISDITIDQAKRTLLTSSGDGTLGVFNIKRRRFELL), 205–244 (IQNGDLTSVSIMKRGRKVVCGSGEGTIYIFNWNGFGATSD), 247–286 (AVQAESVDCIVPITDSILCAASTDGVIRAINILPNRVVGS), and 290–329 (HVGEAIEEIARCRDTHFLASCAHDELIKFWDISSLPDEKV). Positions 356–387 (FFAGLLDTTEENGKEGENDEDDDDEDSDSGSD) are disordered. The span at 372-387 (ENDEDDDDEDSDSGSD) shows a compositional bias: acidic residues.

Belongs to the WD repeat WDR55 family.

Its subcellular location is the nucleus. It localises to the nucleolus. Functionally, nucleolar protein that acts as a modulator of rRNA synthesis. Plays a central role during organogenesis. This is WD repeat-containing protein 55 (wdr55) from Danio rerio (Zebrafish).